We begin with the raw amino-acid sequence, 224 residues long: UPF0173 metal-dependent hydrolase STH3160 (224 aa).

Belongs to the UPF0173 family.

This is UPF0173 metal-dependent hydrolase STH3160 from Symbiobacterium thermophilum (strain DSM 24528 / JCM 14929 / IAM 14863 / T).